The primary structure comprises 525 residues: MPRTKEEPELSEFEKQRAANIAERDALLKKLTLEAQSAGIFSKPPASKSSSQTKKKPAPKRVKKEDEPPVPRRMSSRLRGLAAESEIAKRKAEDEYQAMKAAAQAKRMRISGDLNVGDIVVGENKWNETGLQGLGIVNSAQRYQRTFGEEDIKKTTNKELKELREKMSGLQLWEPWEPNRIKITRERIYSMLFHPTESKPLIFAGDKTGHLGILDASQQPDQNESDEEDEYPDPTITTIKPHTNTISAMHIHPSDPSKLYSGSYDSSIRALDLEKSVATEAYAPASSSDDEPLSGIDMAPTDPHVLYFTTLDGFFGRHDMRVSSKANPGDGSAVTFYQLSEKKIGGFSLCPTQPHYMATASLDRTMKVWDLRHLSTKHPKPVGEHESSLSVSHAAFNQKGQIATTSYDNSIKIYDLASKGLKDWKPNHTLSEDEMAPDAVIRHNCQTGKWVTILRPQWQACPDSPVERFCIGNMNRFVDIYTSTGEQLAQLGADVITAVPAVAVFHRTQNWVVGGTGSAKVCLWM.

Disordered stretches follow at residues 38–86 and 212–233; these read AGIF…AESE and GILD…EYPD. The span at 53–62 shows a compositional bias: basic residues; that stretch reads TKKKPAPKRV. 7 WD repeats span residues 183 to 224, 241 to 281, 288 to 328, 339 to 379, 384 to 425, 448 to 491, and 494 to 525; these read ITRE…DQNE, PHTN…ATEA, SDDE…KANP, LSEK…TKHP, EHES…KDWK, GKWV…LAQL, and DVIT…CLWM. Over residues 223 to 232 the composition is skewed to acidic residues; that stretch reads NESDEEDEYP.

This sequence belongs to the WD repeat DDB2/WDR76 family.

Its function is as follows. DNA-binding protein that binds to both single- and double-stranded DNA. Binds preferentially to UV-damaged DNA. May be involved in DNA-metabolic processes. This is DNA damage-binding protein CMR1 from Coccidioides immitis (strain RS) (Valley fever fungus).